We begin with the raw amino-acid sequence, 443 residues long: UDP-N-acetylmuramate--L-alanine ligase (443 aa).

ATP is bound at residue 110 to 116 (GAHGKTS).

It belongs to the MurCDEF family.

It localises to the cytoplasm. The catalysed reaction is UDP-N-acetyl-alpha-D-muramate + L-alanine + ATP = UDP-N-acetyl-alpha-D-muramoyl-L-alanine + ADP + phosphate + H(+). It functions in the pathway cell wall biogenesis; peptidoglycan biosynthesis. In terms of biological role, cell wall formation. This Lactococcus lactis subsp. cremoris (strain SK11) protein is UDP-N-acetylmuramate--L-alanine ligase.